The following is a 543-amino-acid chain: CTP synthase (543 aa).

Residues 1–265 (MARYIFITGG…DDEVLAAFGI (265 aa)) form an amidoligase domain region. Ser-13 contributes to the CTP binding site. Position 13 (Ser-13) interacts with UTP. Residue 14-19 (SLGKGL) coordinates ATP. Residue Tyr-54 participates in L-glutamine binding. Asp-71 serves as a coordination point for ATP. Mg(2+) contacts are provided by Asp-71 and Glu-139. CTP is bound by residues 146–148 (DIE), 186–191 (KTKPTQ), and Lys-222. UTP contacts are provided by residues 186 to 191 (KTKPTQ) and Lys-222. Position 238 to 240 (238 to 240 (RDA)) interacts with ATP. The Glutamine amidotransferase type-1 domain maps to 291-542 (TIAIVGKYTG…IQAAVVQSRL (252 aa)). L-glutamine is bound at residue Gly-353. The active-site Nucleophile; for glutamine hydrolysis is the Cys-380. Residues 381–384 (FGMQ), Glu-404, and Arg-470 each bind L-glutamine. Catalysis depends on residues His-515 and Glu-517.

The protein belongs to the CTP synthase family. As to quaternary structure, homotetramer.

The catalysed reaction is UTP + L-glutamine + ATP + H2O = CTP + L-glutamate + ADP + phosphate + 2 H(+). It carries out the reaction L-glutamine + H2O = L-glutamate + NH4(+). The enzyme catalyses UTP + NH4(+) + ATP = CTP + ADP + phosphate + 2 H(+). Its pathway is pyrimidine metabolism; CTP biosynthesis via de novo pathway; CTP from UDP: step 2/2. With respect to regulation, allosterically activated by GTP, when glutamine is the substrate; GTP has no effect on the reaction when ammonia is the substrate. The allosteric effector GTP functions by stabilizing the protein conformation that binds the tetrahedral intermediate(s) formed during glutamine hydrolysis. Inhibited by the product CTP, via allosteric rather than competitive inhibition. Catalyzes the ATP-dependent amination of UTP to CTP with either L-glutamine or ammonia as the source of nitrogen. Regulates intracellular CTP levels through interactions with the four ribonucleotide triphosphates. The polypeptide is CTP synthase (Nitrobacter winogradskyi (strain ATCC 25391 / DSM 10237 / CIP 104748 / NCIMB 11846 / Nb-255)).